We begin with the raw amino-acid sequence, 265 residues long: Acetylglutamate kinase (265 aa).

Substrate is bound by residues 41-42 (GG), Arg-63, and Asn-156.

The protein belongs to the acetylglutamate kinase family. ArgB subfamily.

Its subcellular location is the cytoplasm. The enzyme catalyses N-acetyl-L-glutamate + ATP = N-acetyl-L-glutamyl 5-phosphate + ADP. It participates in amino-acid biosynthesis; L-arginine biosynthesis; N(2)-acetyl-L-ornithine from L-glutamate: step 2/4. In terms of biological role, catalyzes the ATP-dependent phosphorylation of N-acetyl-L-glutamate. This chain is Acetylglutamate kinase, found in Brevibacillus brevis (strain 47 / JCM 6285 / NBRC 100599).